Consider the following 122-residue polypeptide: Large ribosomal subunit protein bL12 (122 aa).

Belongs to the bacterial ribosomal protein bL12 family. In terms of assembly, homodimer. Part of the ribosomal stalk of the 50S ribosomal subunit. Forms a multimeric L10(L12)X complex, where L10 forms an elongated spine to which 2 to 4 L12 dimers bind in a sequential fashion. Binds GTP-bound translation factors.

Forms part of the ribosomal stalk which helps the ribosome interact with GTP-bound translation factors. Is thus essential for accurate translation. The chain is Large ribosomal subunit protein bL12 from Xylella fastidiosa (strain M23).